Consider the following 431-residue polypeptide: Gamma-glutamyl phosphate reductase (431 aa).

This sequence belongs to the gamma-glutamyl phosphate reductase family.

It is found in the cytoplasm. It carries out the reaction L-glutamate 5-semialdehyde + phosphate + NADP(+) = L-glutamyl 5-phosphate + NADPH + H(+). It functions in the pathway amino-acid biosynthesis; L-proline biosynthesis; L-glutamate 5-semialdehyde from L-glutamate: step 2/2. Functionally, catalyzes the NADPH-dependent reduction of L-glutamate 5-phosphate into L-glutamate 5-semialdehyde and phosphate. The product spontaneously undergoes cyclization to form 1-pyrroline-5-carboxylate. The protein is Gamma-glutamyl phosphate reductase of Beijerinckia indica subsp. indica (strain ATCC 9039 / DSM 1715 / NCIMB 8712).